A 610-amino-acid polypeptide reads, in one-letter code: Transcription termination factor Rho (610 aa).

Positions 117 to 227 are disordered; the sequence is EVSRRERRGA…GDGAEAELRQ (111 aa). The span at 118–131 shows a compositional bias: basic and acidic residues; the sequence is VSRRERRGASREAD. Positions 178 to 187 are enriched in polar residues; sequence GVEQQSSSLQ. Residues 189-198 show a composition bias toward basic and acidic residues; sequence RGDDDGEGRQ. Basic residues predominate over residues 199 to 214; sequence GRRGRRFRDRDRRRRG. Over residues 215–227 the composition is skewed to basic and acidic residues; the sequence is ERSGDGAEAELRQ. Residues 231–309 enclose the Rho RNA-BD domain; sequence VQPVAGILDV…VRLDSINGGS (79 aa). Residues 352 to 357, 364 to 369, and Arg395 contribute to the ATP site; these read GKGQRA and KAGKTT.

The protein belongs to the Rho family. As to quaternary structure, homohexamer. The homohexamer assembles into an open ring structure.

Functionally, facilitates transcription termination by a mechanism that involves Rho binding to the nascent RNA, activation of Rho's RNA-dependent ATPase activity, and release of the mRNA from the DNA template. The sequence is that of Transcription termination factor Rho from Mycobacterium leprae (strain TN).